The sequence spans 301 residues: UDP-N-acetylenolpyruvoylglucosamine reductase (301 aa).

The FAD-binding PCMH-type domain maps to 30 to 194 (VGGEADYLVF…LSVKFALAPG (165 aa)). The active site involves arginine 173. The Proton donor role is filled by serine 223. Residue glutamate 293 is part of the active site.

The protein belongs to the MurB family. Requires FAD as cofactor.

It is found in the cytoplasm. The enzyme catalyses UDP-N-acetyl-alpha-D-muramate + NADP(+) = UDP-N-acetyl-3-O-(1-carboxyvinyl)-alpha-D-glucosamine + NADPH + H(+). The protein operates within cell wall biogenesis; peptidoglycan biosynthesis. Functionally, cell wall formation. The sequence is that of UDP-N-acetylenolpyruvoylglucosamine reductase from Streptococcus pneumoniae (strain JJA).